A 259-amino-acid chain; its full sequence is Anti-Pycsar protein Apyc1 (259 aa).

The beta-lactamase-like stretch occupies residues 21–233; the sequence is YNNSALVTFT…KQQNKIFLMH (213 aa). Zn(2+) is bound by residues H64, H66, D68, H69, H154, D178, and H233.

Belongs to the anti-Pycsar protein Apyc1 family. As to quaternary structure, homodimer. It depends on Zn(2+) as a cofactor.

It carries out the reaction 3',5'-cyclic CMP + H2O = CMP + H(+). The enzyme catalyses 3',5'-cyclic UMP + H2O = UMP + H(+). Functionally, counteracts the host Pycsar antiviral defense system. Phosphodiesterase that enables metal-dependent hydrolysis of host cyclic nucleotide Pycsar defense signals such as cCMP and cUMP. This Bacillus phage vB_BveM-Goe7 protein is Anti-Pycsar protein Apyc1.